The primary structure comprises 575 residues: Proline--tRNA ligase (575 aa).

It belongs to the class-II aminoacyl-tRNA synthetase family. ProS type 1 subfamily. Homodimer.

The protein resides in the cytoplasm. The catalysed reaction is tRNA(Pro) + L-proline + ATP = L-prolyl-tRNA(Pro) + AMP + diphosphate. Its function is as follows. Catalyzes the attachment of proline to tRNA(Pro) in a two-step reaction: proline is first activated by ATP to form Pro-AMP and then transferred to the acceptor end of tRNA(Pro). As ProRS can inadvertently accommodate and process non-cognate amino acids such as alanine and cysteine, to avoid such errors it has two additional distinct editing activities against alanine. One activity is designated as 'pretransfer' editing and involves the tRNA(Pro)-independent hydrolysis of activated Ala-AMP. The other activity is designated 'posttransfer' editing and involves deacylation of mischarged Ala-tRNA(Pro). The misacylated Cys-tRNA(Pro) is not edited by ProRS. The sequence is that of Proline--tRNA ligase from Pseudothermotoga lettingae (strain ATCC BAA-301 / DSM 14385 / NBRC 107922 / TMO) (Thermotoga lettingae).